We begin with the raw amino-acid sequence, 257 residues long: Putative hydro-lyase Bcenmc03_3969 (257 aa).

This sequence belongs to the D-glutamate cyclase family.

The sequence is that of Putative hydro-lyase Bcenmc03_3969 from Burkholderia orbicola (strain MC0-3).